A 397-amino-acid polypeptide reads, in one-letter code: Lymphoid enhancer-binding factor 1 (397 aa).

A CTNNB1-binding region spans residues 1–60 (MPQLSGGGGGGDPELCATDEMIPFKDEGDPQKEKIFAEISHPEEEGDLADIKSSLVNESE). Residue lysine 25 forms a Glycyl lysine isopeptide (Lys-Gly) (interchain with G-Cter in SUMO) linkage. The disordered stretch occupies residues 38–102 (EISHPEEEGD…KHPDGGLYNK (65 aa)). Residues 80–96 (PYHDKAREHPDDGKHPD) are compositionally biased toward basic and acidic residues. Serine 130 carries the phosphoserine modification. Threonine 153 is subject to Phosphothreonine; by NLK. Serine 164 is subject to Phosphoserine; by NLK. Disordered stretches follow at residues 164–190 (SPGS…PAPE) and 266–296 (VKQE…KRPH). Residue lysine 267 forms a Glycyl lysine isopeptide (Lys-Gly) (interchain with G-Cter in SUMO) linkage. The segment covering 267 to 294 (KQEHPHTDSDLMHVKPEHEQRKEQEPKR) has biased composition (basic and acidic residues). Residues 297–365 (IKKPLNAFML…LHMQLYPGWS (69 aa)) constitute a DNA-binding region (HMG box). Positions 367-397 (RDNYGKKKKRKREKLQESTSGTGPRMTAAYI) are disordered.

This sequence belongs to the TCF/LEF family. Binds the armadillo repeat of CTNNB1 and forms a stable complex. Interacts with TLE1, PIASG, ALYREF/THOC4, EP300, MDFI and MDFIC. Interacts with DAZAP2. In terms of processing, phosphorylated at Thr-153 and/or Ser-164 by NLK. Phosphorylation by NLK at these sites represses LEF1-mediated transcriptional activation of target genes of the canonical Wnt signaling pathway.

The protein resides in the nucleus. Functionally, transcription factor that binds DNA in a sequence-specific manner. Participates in the Wnt signaling pathway. Activates transcription of target genes in the presence of CTNNB1 and EP300. PIASG antagonizes both Wnt-dependent and Wnt-independent activation by LEF1. TLE1, TLE2, TLE3 and TLE4 repress transactivation mediated by LEF1 and CTNNB1. Regulates T-cell receptor alpha enhancer function. Required for IL17A expressing gamma-delta T-cell maturation and development, via binding to regulator loci of BLK to modulate expression. Acts as a positive regulator of odontoblast differentiation during mesenchymal tooth germ formation, expression is repressed during the bell stage by MSX1-mediated inhibition of CTNNB1 signaling. May play a role in hair cell differentiation and follicle morphogenesis. This is Lymphoid enhancer-binding factor 1 from Rattus norvegicus (Rat).